We begin with the raw amino-acid sequence, 1148 residues long: Signal transducer and activator of transcription B (1148 aa).

A compositionally biased stretch (low complexity) spans 1-36 (MEVTNNGSNNSSTIASTNPPTSPSTTSTSKSLPPLS). 5 disordered regions span residues 1–81 (MEVT…NNNN), 93–178 (SSSN…LSSS), 268–312 (NTNN…PSNG), 403–425 (KNNINNINNNSNSNNNNGNNSLL), and 453–645 (YDYN…KTVT). The segment covering 37 to 47 (FLNSQWENKQS) has biased composition (polar residues). Composition is skewed to low complexity over residues 48–81 (NNNNNSNNNNINNNNNNNNNNNNNNNNNNNNNNN), 106–178 (NNNN…LSSS), and 268–298 (NTNNNINNNNNNNNNNNNNNNNNSINNNNNN). The span at 466–517 (SNSSNNNSSNNNSNNNNNNNSNNNNNIIGSISPPHSSQLQQVSSPQQQQQQQ) shows a compositional bias: low complexity. Positions 525 to 541 (SISSGSIKDLINSPNKE) are enriched in polar residues. Residues 544–557 (SKSQYPSSLSQSSS) show a composition bias toward low complexity. Acidic residues predominate over residues 561–572 (MDTDVDSTDEFD). Over residues 574 to 610 (GSNSNNNNNNNNNNNNNNNSNNSNNKKRNNSNNNNLG) the composition is skewed to low complexity. Positions 997-1122 (WQNGFIFMFL…TIPVFKREPK (126 aa)) constitute an SH2 domain.

This sequence belongs to the transcription factor STAT family. Homodimer. Does not form heterodimers with other family members.

It is found in the nucleus. Functionally, transcription factor that regulates gene expression during development. Required for optimal cell growth. The sequence is that of Signal transducer and activator of transcription B (dstB) from Dictyostelium discoideum (Social amoeba).